A 325-amino-acid chain; its full sequence is Treponemal membrane protein B (325 aa).

A signal peptide spans 1 to 24 (MKTRNFSLVSALYVLLGVPLFVSA). An EAARKAAE repeat occupies 159–166 (EAARKAAE). The ARKLEEQRIAAQKAQEERKRAEE repeat unit spans residues 167 to 189 (ARKLEEQRIAAQKAQEERKRAEE). Positions 176–224 (AAQKAQEERKRAEEEAARKAAEARKLEEQRIAAQKAQEERKRAEEEAAR) are disordered. One copy of the EAARKAAE repeat lies at 190–197 (EAARKAAE). One copy of the ARKLEEQRIAAQKAQEERKRAEE repeat lies at 198–220 (ARKLEEQRIAAQKAQEERKRAEE). The stretch at 221–228 (EAARKAAE) is one EAARKAAE repeat. The EAARKAEE repeat unit spans residues 229–236 (EAARKAEE).

This sequence to T.phagedenis TmpB.

Its subcellular location is the cell outer membrane. In terms of biological role, tmp may serve as a porin or transport protein for large molecules. This Treponema pallidum (strain Nichols) protein is Treponemal membrane protein B (tmpB).